The chain runs to 195 residues: Imidazoleglycerol-phosphate dehydratase (195 aa).

It belongs to the imidazoleglycerol-phosphate dehydratase family.

It localises to the cytoplasm. It catalyses the reaction D-erythro-1-(imidazol-4-yl)glycerol 3-phosphate = 3-(imidazol-4-yl)-2-oxopropyl phosphate + H2O. Its pathway is amino-acid biosynthesis; L-histidine biosynthesis; L-histidine from 5-phospho-alpha-D-ribose 1-diphosphate: step 6/9. This chain is Imidazoleglycerol-phosphate dehydratase, found in Geobacillus kaustophilus (strain HTA426).